The primary structure comprises 648 residues: DNA gyrase subunit B (648 aa).

The Toprim domain maps to 427–541 (TELFIVEGDS…AGYVYIAQPP (115 aa)). Residues glutamate 433, aspartate 506, and aspartate 508 each coordinate Mg(2+).

Belongs to the type II topoisomerase GyrB family. As to quaternary structure, heterotetramer, composed of two GyrA and two GyrB chains. In the heterotetramer, GyrA contains the active site tyrosine that forms a transient covalent intermediate with DNA, while GyrB binds cofactors and catalyzes ATP hydrolysis. It depends on Mg(2+) as a cofactor. Mn(2+) serves as cofactor. Ca(2+) is required as a cofactor.

Its subcellular location is the cytoplasm. The catalysed reaction is ATP-dependent breakage, passage and rejoining of double-stranded DNA.. Functionally, a type II topoisomerase that negatively supercoils closed circular double-stranded (ds) DNA in an ATP-dependent manner to modulate DNA topology and maintain chromosomes in an underwound state. Negative supercoiling favors strand separation, and DNA replication, transcription, recombination and repair, all of which involve strand separation. Also able to catalyze the interconversion of other topological isomers of dsDNA rings, including catenanes and knotted rings. Type II topoisomerases break and join 2 DNA strands simultaneously in an ATP-dependent manner. The sequence is that of DNA gyrase subunit B from Streptococcus pneumoniae serotype 4 (strain ATCC BAA-334 / TIGR4).